Reading from the N-terminus, the 662-residue chain is Pollen receptor-like kinase 1 (662 aa).

A signal peptide spans Met-1–Gly-31. Residues Leu-32–Pro-256 are Extracellular-facing. LRR repeat units lie at residues Gln-79–Thr-98, Ser-99–Ala-121, Ala-122–Gly-144, Trp-147–Leu-169, Lys-171–His-191, and Gln-192–Thr-214. Residue Asn-197 is glycosylated (N-linked (GlcNAc...) asparagine). The disordered stretch occupies residues Glu-233–Ser-253. A helical transmembrane segment spans residues Leu-257–Leu-277. Residues Leu-278–Ala-662 are Cytoplasmic-facing. A disordered region spans residues Arg-288–Gly-330. The Protein kinase domain occupies Lys-357–Tyr-639. Position 359 is a phosphoserine (Ser-359). ATP-binding positions include Leu-363–Ser-371 and Lys-385. Ser-437 carries the post-translational modification Phosphoserine. A Phosphothreonine modification is found at Thr-457. Tyr-527 is subject to Phosphotyrosine. The tract at residues Asp-636–Ala-662 is disordered. The span at Thr-646–Ser-655 shows a compositional bias: basic and acidic residues.

Belongs to the protein kinase superfamily. Ser/Thr protein kinase family. In terms of assembly, interacts in vitro with ROPGEF1 (via PRONE domain). Expressed in pollen and/or in flowers, but not in leaves.

The protein resides in the cell membrane. The enzyme catalyses L-seryl-[protein] + ATP = O-phospho-L-seryl-[protein] + ADP + H(+). It catalyses the reaction L-threonyl-[protein] + ATP = O-phospho-L-threonyl-[protein] + ADP + H(+). Its function is as follows. Receptor-like kinase involved in the control of pollen germination and pollen tube polar growth. The protein is Pollen receptor-like kinase 1 of Arabidopsis thaliana (Mouse-ear cress).